An 80-amino-acid polypeptide reads, in one-letter code: Conotoxin Lt6.2 (80 aa).

The signal sequence occupies residues 1 to 24 (MKLTRVLIIAVLFLTAYQLTTVET). Residues 25 to 47 (YSRGKWMHRALRSTGKNPKVTRE) constitute a propeptide that is removed on maturation. Intrachain disulfides connect cysteine 48–cysteine 62, cysteine 55–cysteine 66, and cysteine 61–cysteine 73.

It belongs to the conotoxin O1 superfamily. As to expression, expressed by the venom duct.

It localises to the secreted. In Conus litteratus (Lettered cone), this protein is Conotoxin Lt6.2.